Reading from the N-terminus, the 416-residue chain is Probable endo-beta-1,4-glucanase celB (416 aa).

The first 17 residues, 1–17 (MIWTLAPFVALLPLVTA), serve as a signal peptide directing secretion. Residues N45, N104, N117, and N135 are each glycosylated (N-linked (GlcNAc...) asparagine). The active-site Nucleophile is the E214. E219 (proton donor) is an active-site residue. N-linked (GlcNAc...) asparagine glycosylation is found at N233, N278, N292, and N382.

This sequence belongs to the glycosyl hydrolase 7 (cellulase C) family.

The protein resides in the secreted. The enzyme catalyses Endohydrolysis of (1-&gt;4)-beta-D-glucosidic linkages in cellulose, lichenin and cereal beta-D-glucans.. Its function is as follows. Has endoglucanase activity on substrates containing beta-1,4 glycosidic bonds, like in carboxymethylcellulose (CMC), hydroxyethylcellulose (HEC) and beta-glucan. Involved in the degradation of complex natural cellulosic substrates. The sequence is that of Probable endo-beta-1,4-glucanase celB (celB) from Aspergillus flavus (strain ATCC 200026 / FGSC A1120 / IAM 13836 / NRRL 3357 / JCM 12722 / SRRC 167).